A 37-amino-acid chain; its full sequence is Photosystem I reaction center subunit VIII (37 aa).

A helical membrane pass occupies residues 7-27; sequence LPSFFVPLVGLVFPAIAMASL.

The protein belongs to the PsaI family.

It is found in the plastid. The protein resides in the chloroplast thylakoid membrane. Functionally, may help in the organization of the PsaL subunit. The chain is Photosystem I reaction center subunit VIII from Eucalyptus globulus subsp. globulus (Tasmanian blue gum).